Reading from the N-terminus, the 67-residue chain is Conotoxin ArMLCL-012 (67 aa).

The first 19 residues, 1 to 19 (MLCLPVFIILLLLASPAAS), serve as a signal peptide directing secretion. A propeptide spanning residues 20–45 (NPLEKRIQSDLIRAALEDADTKNDPR) is cleaved from the precursor. Residue cysteine 64 is modified to Cysteine amide.

The protein belongs to the conotoxin T superfamily. Contains 2 disulfide bonds that can be either 'C1-C3, C2-C4' or 'C1-C4, C2-C3', since these disulfide connectivities have been observed for conotoxins with cysteine framework V (for examples, see AC P0DQQ7 and AC P81755). Expressed by the venom duct.

Its subcellular location is the secreted. The protein is Conotoxin ArMLCL-012 of Conus arenatus (Sand-dusted cone).